A 392-amino-acid polypeptide reads, in one-letter code: Major outer membrane protein P.IA (392 aa).

The signal sequence occupies residues 1-19 (MRKKLTALVLSALPLAAVA).

It belongs to the Gram-negative porin family. Homotrimer.

Its subcellular location is the cell outer membrane. Functionally, serves as a slightly cation selective porin. Major antigen on the gonococcal cell surface and it may have pathogenic properties in addition to its porin activity. This Neisseria meningitidis serogroup B (strain ATCC BAA-335 / MC58) protein is Major outer membrane protein P.IA (porA).